Reading from the N-terminus, the 273-residue chain is Dermonecrotic toxin LhSicTox-alphaIA1i (273 aa).

The active site involves histidine 5. The Mg(2+) site is built by glutamate 25 and aspartate 27. The Nucleophile role is filled by histidine 41. Cystine bridges form between cysteine 45-cysteine 51 and cysteine 47-cysteine 190. Residue aspartate 85 participates in Mg(2+) binding.

The protein belongs to the arthropod phospholipase D family. Class II subfamily. It depends on Mg(2+) as a cofactor. In terms of tissue distribution, expressed by the venom gland.

The protein resides in the secreted. The catalysed reaction is an N-(acyl)-sphingosylphosphocholine = an N-(acyl)-sphingosyl-1,3-cyclic phosphate + choline. It carries out the reaction an N-(acyl)-sphingosylphosphoethanolamine = an N-(acyl)-sphingosyl-1,3-cyclic phosphate + ethanolamine. It catalyses the reaction a 1-acyl-sn-glycero-3-phosphocholine = a 1-acyl-sn-glycero-2,3-cyclic phosphate + choline. The enzyme catalyses a 1-acyl-sn-glycero-3-phosphoethanolamine = a 1-acyl-sn-glycero-2,3-cyclic phosphate + ethanolamine. In terms of biological role, dermonecrotic toxins cleave the phosphodiester linkage between the phosphate and headgroup of certain phospholipids (sphingolipid and lysolipid substrates), forming an alcohol (often choline) and a cyclic phosphate. This toxin acts on sphingomyelin (SM). It may also act on ceramide phosphoethanolamine (CPE), lysophosphatidylcholine (LPC) and lysophosphatidylethanolamine (LPE), but not on lysophosphatidylserine (LPS), and lysophosphatidylglycerol (LPG). It acts by transphosphatidylation, releasing exclusively cyclic phosphate products as second products. Induces dermonecrosis, hemolysis, increased vascular permeability, edema, inflammatory response, and platelet aggregation. In Loxosceles hirsuta (Recluse spider), this protein is Dermonecrotic toxin LhSicTox-alphaIA1i.